The sequence spans 723 residues: Threonine--tRNA ligase, mitochondrial (723 aa).

At S57 the chain carries Phosphoserine. Residues R64–T126 enclose the TGS domain.

It belongs to the class-II aminoacyl-tRNA synthetase family. As to quaternary structure, homodimer.

It is found in the mitochondrion matrix. The catalysed reaction is tRNA(Thr) + L-threonine + ATP = L-threonyl-tRNA(Thr) + AMP + diphosphate + H(+). Functionally, catalyzes the attachment of threonine to tRNA(Thr) in a two-step reaction: threonine is first activated by ATP to form Thr-AMP and then transferred to the acceptor end of tRNA(Thr). Also edits incorrectly charged tRNA(Thr) via its editing domain. The chain is Threonine--tRNA ligase, mitochondrial (Tars2) from Mus musculus (Mouse).